A 205-amino-acid polypeptide reads, in one-letter code: Gap junction epsilon-1 protein (205 aa).

Topologically, residues 1 to 22 (MSLNYIKNFYEGCVKPPTVIGQ) are cytoplasmic. The helical transmembrane segment at 23–43 (FHTLFFGSVRMFFLGVLGFAV) threads the bilayer. The Extracellular segment spans residues 44 to 74 (YGNEALHFSCDPDKREINLFCYNQFRPITPQ). 2 disulfide bridges follow: Cys53–Cys161 and Cys64–Cys147. The helical transmembrane segment at 75–95 (VFWALQLVIVLLPGAIFHLYA) threads the bilayer. Topologically, residues 96–111 (ACKSINQDCILQKPVY) are cytoplasmic. The chain crosses the membrane as a helical span at residues 112–132 (TVIYVLSVLLRISLEVFAFWL). Topologically, residues 133-170 (QIHLFGFQVKPIYLCDTESLGKKPNILKCMVPEHFEKT) are extracellular. The chain crosses the membrane as a helical span at residues 171–191 (IFLIAMYTFTVITMVLCVAEV). Residues 192–205 (FEIIFRRSCFLFKR) lie on the Cytoplasmic side of the membrane.

Belongs to the connexin family. Beta-type (group I) subfamily. As to quaternary structure, a connexon is composed of a hexamer of connexins. As to expression, highly expressed in lens, where it is mainly found in lens fibers and to a lesser extent in lens epithelium. Weakly expressed in retina. Not detected in other tissues tested.

It localises to the cell membrane. Mediates calcium-independent ATP release, suggesting activity as a hemichannel. Does not form functional gap junctions. May play a non-essential role in eye lens development. The polypeptide is Gap junction epsilon-1 protein (Mus musculus (Mouse)).